The chain runs to 344 residues: Glyceraldehyde-3-phosphate dehydrogenase (344 aa).

NAD(+)-binding positions include 11 to 12 (TI) and Gly-110. Residue 139–141 (SCN) participates in D-glyceraldehyde 3-phosphate binding. Cys-140 serves as the catalytic Nucleophile. Residue Arg-169 participates in NAD(+) binding. 195–196 (HG) is a D-glyceraldehyde 3-phosphate binding site. Gln-302 provides a ligand contact to NAD(+).

This sequence belongs to the glyceraldehyde-3-phosphate dehydrogenase family. Homotetramer.

The protein resides in the cytoplasm. It carries out the reaction D-glyceraldehyde 3-phosphate + phosphate + NADP(+) = (2R)-3-phospho-glyceroyl phosphate + NADPH + H(+). It catalyses the reaction D-glyceraldehyde 3-phosphate + phosphate + NAD(+) = (2R)-3-phospho-glyceroyl phosphate + NADH + H(+). It functions in the pathway carbohydrate degradation; glycolysis; pyruvate from D-glyceraldehyde 3-phosphate: step 1/5. The sequence is that of Glyceraldehyde-3-phosphate dehydrogenase from Pyrobaculum arsenaticum (strain DSM 13514 / JCM 11321 / PZ6).